We begin with the raw amino-acid sequence, 109 residues long: MICFIFTYKDFIIKMSTFWQNLWLIYLFIVFYVLGMSFVVWLLLRSASIKNFIYTLVAGVAEAAAQATQTELNYHACKRYTKACNDADIPVNPHKIEELTTPRGGTGRN.

Its subcellular location is the mitochondrion. This is an uncharacterized protein from Marchantia polymorpha (Common liverwort).